The following is a 205-amino-acid chain: MSEVSSVVNRIRRATIERVTGETNITLTLTIDGSGQADVQTGIGFLDHMLTLWARHGLFDLQVRAQGDLHIDEHHTAEDVCICLGRAIDQALGERAGIVRTAHSFVPMDEALALVAVDLGGRPYCVVQADFVTMRVGQLGTDLVAHLFESVAFNGRFNLHAQVMYGRNDHHKIEALFKAFGRALDAATRIDARLGGTIPSTKGVL.

Belongs to the imidazoleglycerol-phosphate dehydratase family.

It is found in the cytoplasm. It catalyses the reaction D-erythro-1-(imidazol-4-yl)glycerol 3-phosphate = 3-(imidazol-4-yl)-2-oxopropyl phosphate + H2O. It participates in amino-acid biosynthesis; L-histidine biosynthesis; L-histidine from 5-phospho-alpha-D-ribose 1-diphosphate: step 6/9. This is Imidazoleglycerol-phosphate dehydratase from Chloroflexus aurantiacus (strain ATCC 29366 / DSM 635 / J-10-fl).